Reading from the N-terminus, the 285-residue chain is Large ribosomal subunit protein uL2 (285 aa).

A disordered region spans residues 215–285; the sequence is GRSRHKGIRP…IIRNRKGEQY (71 aa). The segment covering 256–272 has biased composition (basic residues); that stretch reads WGKRHMGVKTRNMKKHS.

The protein belongs to the universal ribosomal protein uL2 family. Part of the 50S ribosomal subunit. Forms a bridge to the 30S subunit in the 70S ribosome.

Its function is as follows. One of the primary rRNA binding proteins. Required for association of the 30S and 50S subunits to form the 70S ribosome, for tRNA binding and peptide bond formation. It has been suggested to have peptidyltransferase activity; this is somewhat controversial. Makes several contacts with the 16S rRNA in the 70S ribosome. This Mycoplasma genitalium (strain ATCC 33530 / DSM 19775 / NCTC 10195 / G37) (Mycoplasmoides genitalium) protein is Large ribosomal subunit protein uL2.